The chain runs to 532 residues: Egg peptide speract receptor (532 aa).

The first 30 residues, 1 to 30 (MGLPMMLQQYCWAACLVICIAISSVDDVGA), serve as a signal peptide directing secretion. The Extracellular segment spans residues 31–491 (EQNYGREAVE…VVCEGSTAPP (461 aa)). 4 SRCR domains span residues 43-144 (IRLI…VECL), 153-257 (LRMI…VVCK), 264-366 (IRLM…VVCA), and 382-485 (VRIV…VVCE). Cystine bridges form between Cys-68-Cys-133, Cys-81-Cys-143, Cys-112-Cys-122, Cys-178-Cys-244, Cys-191-Cys-256, Cys-223-Cys-233, Cys-289-Cys-355, Cys-302-Cys-365, Cys-335-Cys-345, Cys-406-Cys-475, Cys-419-Cys-484, and Cys-454-Cys-465. N-linked (GlcNAc...) asparagine glycosylation is found at Asn-78 and Asn-115. N-linked (GlcNAc...) asparagine glycosylation is present at Asn-459. Residues 492–520 (SGMSIAVIGGAAGGGVAGLAVAAFAFYYI) traverse the membrane as a helical segment. Residues 521 to 532 (KFVKPAGGGGQA) lie on the Cytoplasmic side of the membrane.

The protein localises to the membrane. Receptor for the egg peptide speract. The polypeptide is Egg peptide speract receptor (Strongylocentrotus purpuratus (Purple sea urchin)).